A 111-amino-acid chain; its full sequence is Beta-defensin 126 (111 aa).

An N-terminal signal peptide occupies residues 1–20; sequence MKSLLFTLAVFMLLAQLVSG. Residues 21–63 form an in vitro binds to LPS, mediates antimicrobial activity and inhibits LPS-mediated inflammation region; it reads NWYVKKCLNDVGICKKKCKPEEMHVKNGWAMCGKQRDCCVPAD. Intrachain disulfides connect Cys27–Cys58, Cys34–Cys52, and Cys38–Cys59.

It belongs to the beta-defensin family. As to quaternary structure, homodimer or homooligomer; disulfide-linked. O-glycosylated; glycans contain alpha(2,3)-linked sialic acids.

It localises to the secreted. In terms of biological role, highly glycosylated atypical beta-defensin involved in several aspects of sperm function. Facilitates sperm transport in the female reproductive tract and contributes to sperm protection against immunodetection; both functions are probably implicating the negative surface charge provided by its O-linked oligosaccharides in the sperm glycocalyx. Involved in binding of sperm to oviductal epithelial cells to form a sperm reservoir until ovulation. Release from the sperm surface during capacitation and ovaluation by an elevation of oviductal fluid pH is unmasking other surface components and allows sperm to penetrate the cumulus matrix and bind to the zona pellucida of the oocyte. In vitro has antimicrobial activity and may inhibit LPS-mediated inflammation. In Gorilla gorilla gorilla (Western lowland gorilla), this protein is Beta-defensin 126 (DEFB126).